The primary structure comprises 535 residues: Alpha-1,3-mannosyl-glycoprotein 4-beta-N-acetylglucosaminyltransferase A (535 aa).

Residues Met-1 to Gly-6 lie on the Cytoplasmic side of the membrane. The chain crosses the membrane as a helical; Signal-anchor for type II membrane protein span at residues Thr-7 to Trp-27. At Gln-28–Asn-535 the chain is on the lumenal side. Positions Lys-31 to Gln-57 form a coiled coil. N-linked (GlcNAc...) asparagine glycans are attached at residues Asn-77 and Asn-458. Ser-474 carries the post-translational modification Phosphoserine.

The protein belongs to the glycosyltransferase 54 family. The cofactor is a divalent metal cation. N-glycosylated. In terms of tissue distribution, highly expressed in small intestine, kidney, lung and spleen. Weakly expressed in brain, heart and liver.

It is found in the golgi apparatus membrane. The protein resides in the secreted. It carries out the reaction N(4)-{beta-D-GlcNAc-(1-&gt;2)-alpha-D-Man-(1-&gt;3)-[beta-D-GlcNAc-(1-&gt;2)-alpha-D-Man-(1-&gt;6)]-beta-D-Man-(1-&gt;4)-beta-D-GlcNAc-(1-&gt;4)-beta-D-GlcNAc}-L-asparaginyl-[protein] + UDP-N-acetyl-alpha-D-glucosamine = N(4)-{beta-D-GlcNAc-(1-&gt;2)-[beta-D-GlcNAc-(1-&gt;4)]-alpha-D-Man-(1-&gt;3)-[beta-D-GlcNAc-(1-&gt;2)-alpha-D-Man-(1-&gt;6)]-beta-D-Man-(1-&gt;4)-beta-D-GlcNAc-(1-&gt;4)-beta-D-GlcNAc}-L-asparaginyl-[protein] + UDP + H(+). The enzyme catalyses an N(4)-{beta-D-GlcNAc-(1-&gt;2)-alpha-D-Man-(1-&gt;3)-[alpha-D-Man-(1-&gt;6)]-beta-D-Man-(1-&gt;4)-beta-D-GlcNAc-(1-&gt;4)-beta-D-GlcNAc}-L-asparaginyl-[protein] + UDP-N-acetyl-alpha-D-glucosamine = an N(4)-{beta-D-GlcNAc-(1-&gt;2)-[beta-D-GlcNAc-(1-&gt;4)]-alpha-D-Man-(1-&gt;3)-[alpha-D-Man-(1-&gt;6)]-beta-D-Man-(1-&gt;4)-beta-D-GlcNAc-(1-&gt;4)-beta-D-GlcNAc}-L-asparaginyl-[protein] + UDP + H(+). The catalysed reaction is an N(4)-{beta-D-GlcNAc-(1-&gt;2)-alpha-D-Man-(1-&gt;3)-[beta-D-GlcNAc-(1-&gt;2)-[beta-D-GlcNAc-(1-&gt;6)]-alpha-D-Man-(1-&gt;6)]-beta-D-Man-(1-&gt;4)-beta-D-GlcNAc-(1-&gt;4)-beta-D-GlcNAc}-L-asparaginyl-[protein] + UDP-N-acetyl-alpha-D-glucosamine = an N(4)-{beta-D-GlcNAc-(1-&gt;2)-[beta-D-GlcNAc-(1-&gt;4)]-alpha-D-Man-(1-&gt;3)-[beta-D-GlcNAc-(1-&gt;2)-[beta-D-GlcNAc-(1-&gt;6)]-alpha-D-Man-(1-&gt;6)]-beta-D-Man-(1-&gt;4)-beta-D-GlcNAc-(1-&gt;4)-beta-D-GlcNAc}-L-asparaginyl-[protein] + UDP + H(+). It catalyses the reaction an N(4)-{beta-D-GlcNAc-(1-&gt;2)-alpha-D-Man-(1-&gt;3)-[beta-D-GlcNAc-(1-&gt;2)-alpha-D-Man-(1-&gt;6)]-beta-D-Man-(1-&gt;4)-beta-D-GlcNAc-(1-&gt;4)-[alpha-L-Fuc-(1-&gt;6)]-beta-D-GlcNAc}-L-asparaginyl-[protein] + UDP-N-acetyl-alpha-D-glucosamine = N(4)-{beta-D-GlcNAc-(1-&gt;2)-[beta-D-GlcNAc-(1-&gt;4)]-alpha-D-Man-(1-&gt;3)-[beta-D-GlcNAc-(1-&gt;2)-alpha-D-Man-(1-&gt;6)]-beta-D-Man-(1-&gt;4)-beta-D-GlcNAc-(1-&gt;4)-[alpha-L-Fuc-(1-&gt;6)]-beta-D-GlcNAc}-asparaginyl-[protein] + UDP + H(+). It carries out the reaction an N(4)-{beta-D-GlcNAc-(1-&gt;2)-alpha-D-Man-(1-&gt;3)-[beta-D-Gal-(1-&gt;4)-beta-D-GlcNAc-(1-&gt;2)-alpha-D-Man-(1-&gt;6)]-beta-D-Man-(1-&gt;4)-beta-D-GlcNAc-(1-&gt;4)-beta-D-GlcNAc}-L-asparaginyl-[protein] + UDP-N-acetyl-alpha-D-glucosamine = an N(4)-{beta-D-GlcNAc-(1-&gt;2)-[beta-D-GlcNAc-(1-&gt;4)]-alpha-D-Man-(1-&gt;3)-[beta-D-Gal-(1-&gt;4)-beta-D-GlcNAc-(1-&gt;2)-alpha-D-Man-(1-&gt;6)]-beta-D-Man-(1-&gt;4)-beta-D-GlcNAc-(1-&gt;4)-beta-D-GlcNAc}-L-asparaginyl-[protein] + UDP + H(+). The enzyme catalyses N(4)-{beta-D-GlcNAc-(1-&gt;2)-alpha-D-Man-(1-&gt;3)-[alpha-D-Man-(1-&gt;3)-{alpha-D-Man-(1-&gt;6)}-alpha-D-Man-(1-&gt;6)]-beta-D-Man-(1-&gt;4)-beta-D-GlcNAc-(1-&gt;4)-beta-D-GlcNAc}-asparaginyl-[protein] + UDP-N-acetyl-alpha-D-glucosamine = N(4)-{beta-D-GlcNAc-(1-&gt;2)-[beta-D-GlcNAc-(1-&gt;4)]-alpha-D-Man-(1-&gt;3)-[alpha-D-Man-(1-&gt;3)-{alpha-D-Man-(1-&gt;6)}-alpha-D-Man-(1-&gt;6)]-beta-D-Man-(1-&gt;4)-beta-D-GlcNAc-(1-&gt;4)-beta-D-GlcNAc}-asparaginyl-[protein] + UDP + H(+). The catalysed reaction is N(4)-{beta-D-GlcNAc-(1-&gt;2)-alpha-D-Man-(1-&gt;3)-beta-D-Man-(1-&gt;4)-beta-D-GlcNAc-(1-&gt;4)-beta-D-GlcNAc}-asparaginyl-[protein] + UDP-N-acetyl-alpha-D-glucosamine = N(4)-{beta-D-GlcNAc-(1-&gt;2)-[beta-D-GlcNAc-(1-&gt;4)]-alpha-D-Man-(1-&gt;3)-beta-D-Man-(1-&gt;4)-beta-D-GlcNAc-(1-&gt;4)-beta-D-GlcNAc}-asparaginyl-[protein] + UDP + H(+). The protein operates within protein modification; protein glycosylation. With respect to regulation, inhibited by UDP. Functionally, glycosyltransferase that catalyze the transfer of GlcNAc from UDP-GlcNAc to the GlcNAcbeta1-2Manalpha1-3 arm of the core structure of N-linked glycans through a beta1-4 linkage and participates in the production of tri- and tetra-antennary N-linked sugar chains. Involved in glucose transport by mediating SLC2A2/GLUT2 glycosylation, thereby controlling cell-surface expression of SLC2A2 in pancreatic beta cells. This Bos taurus (Bovine) protein is Alpha-1,3-mannosyl-glycoprotein 4-beta-N-acetylglucosaminyltransferase A.